The chain runs to 61 residues: Small ribosomal subunit protein uS14 (61 aa).

Zn(2+) is bound by residues cysteine 24, cysteine 27, cysteine 40, and cysteine 43.

Belongs to the universal ribosomal protein uS14 family. Zinc-binding uS14 subfamily. In terms of assembly, part of the 30S ribosomal subunit. Contacts proteins S3 and S10. It depends on Zn(2+) as a cofactor.

Functionally, binds 16S rRNA, required for the assembly of 30S particles and may also be responsible for determining the conformation of the 16S rRNA at the A site. This chain is Small ribosomal subunit protein uS14, found in Clostridium acetobutylicum (strain ATCC 824 / DSM 792 / JCM 1419 / IAM 19013 / LMG 5710 / NBRC 13948 / NRRL B-527 / VKM B-1787 / 2291 / W).